Here is a 156-residue protein sequence, read N- to C-terminus: Flagellar assembly factor FliW (156 aa).

Belongs to the FliW family. As to quaternary structure, interacts with translational regulator CsrA and flagellin(s).

Its subcellular location is the cytoplasm. Functionally, acts as an anti-CsrA protein, binds CsrA and prevents it from repressing translation of its target genes, one of which is flagellin. Binds to flagellin and participates in the assembly of the flagellum. In Pseudothermotoga lettingae (strain ATCC BAA-301 / DSM 14385 / NBRC 107922 / TMO) (Thermotoga lettingae), this protein is Flagellar assembly factor FliW.